A 319-amino-acid polypeptide reads, in one-letter code: Protein HEXIM1 (319 aa).

The segment covering 1–22 has biased composition (basic and acidic residues); sequence MELIKEETAPEDDSRGRQRDCR. Disordered stretches follow at residues 1-111, 157-223, 262-286, and 299-319; these read MELI…KKRR, LMEE…LQKD, NNWL…RVRE, and NELL…SQPS. The segment covering 24–35 has biased composition (polar residues); it reads SVVSSKQVQRNQ. Residues 49–61 are compositionally biased toward basic and acidic residues; sequence PMCRDRSDPEPRT. Over residues 97–111 the composition is skewed to basic residues; it reads GKKKHRRRPSKKKRR. Residues 185–202 show a composition bias toward acidic residues; it reads TASEDENFEAEEDDEEEG. A compositionally biased stretch (gly residues) spans 203–216; that stretch reads GGGSDGMGRPGQAG. Residues 240–306 are a coiled coil; that stretch reads SKQELVREYL…ENNELLLKTP (67 aa). The segment covering 306–319 has biased composition (polar residues); it reads PASNEPGLNQSQPS.

Belongs to the HEXIM family. In terms of assembly, homooligomer and heterooligomer. Core component of the 7SK RNP complex.

It is found in the nucleus. Its subcellular location is the cytoplasm. Its function is as follows. Transcriptional regulator which functions as a general RNA polymerase II transcription inhibitor. Core component of the 7SK RNP complex: in cooperation with 7SK snRNA sequesters P-TEFb in a large inactive 7SK snRNP complex preventing RNA polymerase II phosphorylation and subsequent transcriptional elongation. Plays a role in the regulation of DNA virus-mediated innate immune response by assembling into the HDP-RNP complex, a complex that serves as a platform for IRF3 phosphorylation and subsequent innate immune response activation through the cGAS-STING pathway. The protein is Protein HEXIM1 (hexim1) of Danio rerio (Zebrafish).